The primary structure comprises 127 residues: Fluoride-specific ion channel FluC 1 (127 aa).

The next 3 membrane-spanning stretches (helical) occupy residues 6-26, 29-49, and 95-115; these read PLVT…GSNL, FVGL…CGSF, and EWAV…VLVG.

This sequence belongs to the fluoride channel Fluc/FEX (TC 1.A.43) family.

It is found in the cell membrane. The enzyme catalyses fluoride(in) = fluoride(out). Functionally, fluoride-specific ion channel. Important for reducing fluoride concentration in the cell, thus reducing its toxicity. The chain is Fluoride-specific ion channel FluC 1 from Haloarcula marismortui (strain ATCC 43049 / DSM 3752 / JCM 8966 / VKM B-1809) (Halobacterium marismortui).